The primary structure comprises 446 residues: Histidine--tRNA ligase (446 aa).

This sequence belongs to the class-II aminoacyl-tRNA synthetase family. In terms of assembly, homodimer.

Its subcellular location is the cytoplasm. It carries out the reaction tRNA(His) + L-histidine + ATP = L-histidyl-tRNA(His) + AMP + diphosphate + H(+). This is Histidine--tRNA ligase from Paraburkholderia phymatum (strain DSM 17167 / CIP 108236 / LMG 21445 / STM815) (Burkholderia phymatum).